The sequence spans 104 residues: NADH-ubiquinone oxidoreductase 12 kDa subunit, mitochondrial (104 aa).

Belongs to the complex I NDUFS6 subunit family. As to quaternary structure, complex I is composed of about 40 different subunits.

It localises to the mitochondrion inner membrane. Its function is as follows. Accessory subunit of the mitochondrial membrane respiratory chain NADH dehydrogenase (Complex I), that is believed not to be involved in catalysis. Complex I functions in the transfer of electrons from NADH to the respiratory chain. The immediate electron acceptor for the enzyme is believed to be ubiquinone. This is NADH-ubiquinone oxidoreductase 12 kDa subunit, mitochondrial (nuo-12.3) from Neurospora crassa (strain ATCC 24698 / 74-OR23-1A / CBS 708.71 / DSM 1257 / FGSC 987).